A 341-amino-acid chain; its full sequence is S-adenosylmethionine:tRNA ribosyltransferase-isomerase (341 aa).

It belongs to the QueA family. As to quaternary structure, monomer.

The protein localises to the cytoplasm. It carries out the reaction 7-aminomethyl-7-carbaguanosine(34) in tRNA + S-adenosyl-L-methionine = epoxyqueuosine(34) in tRNA + adenine + L-methionine + 2 H(+). The protein operates within tRNA modification; tRNA-queuosine biosynthesis. Functionally, transfers and isomerizes the ribose moiety from AdoMet to the 7-aminomethyl group of 7-deazaguanine (preQ1-tRNA) to give epoxyqueuosine (oQ-tRNA). This chain is S-adenosylmethionine:tRNA ribosyltransferase-isomerase, found in Clostridium botulinum (strain Okra / Type B1).